Reading from the N-terminus, the 372-residue chain is ATP phosphoribosyltransferase regulatory subunit (372 aa).

It belongs to the class-II aminoacyl-tRNA synthetase family. HisZ subfamily. In terms of assembly, heteromultimer composed of HisG and HisZ subunits.

It localises to the cytoplasm. Its pathway is amino-acid biosynthesis; L-histidine biosynthesis; L-histidine from 5-phospho-alpha-D-ribose 1-diphosphate: step 1/9. In terms of biological role, required for the first step of histidine biosynthesis. May allow the feedback regulation of ATP phosphoribosyltransferase activity by histidine. This is ATP phosphoribosyltransferase regulatory subunit from Allorhizobium ampelinum (strain ATCC BAA-846 / DSM 112012 / S4) (Agrobacterium vitis (strain S4)).